The primary structure comprises 464 residues: Transcription factor EAT1 (464 aa).

Positions 261–274 are basic motif; degenerate; sequence GKGKANFATERERR. One can recognise a bHLH domain in the interval 261 to 310; it reads GKGKANFATERERREQLNVKFRTLRMLFPNPTKNDRASIVGDAIEYIDEL. The helix-loop-helix motif stretch occupies residues 275–310; the sequence is EQLNVKFRTLRMLFPNPTKNDRASIVGDAIEYIDEL. Residues 338-357 are disordered; the sequence is QEAAADGESSSMRPVRDDQD.

This sequence belongs to the bHLH protein family. As to quaternary structure, interacts with TDR.

Its subcellular location is the nucleus. Functionally, transcription factor involved in the regulation of tapetum programmed cell death (PCD) and degradation during male reproductive development. Interacts with TDR and promote tapetal PCD by regulating the expression of RTS, and the two lipid-transfer proteins C4 and C6, which function in microspore development. Acts downstream from and interacts with TDR in the regulation of tapetal PCD. Regulates directly the aspartic protease AP25 and AP37 during tapetal PCD. May not target the cysteine protease CP1. In Oryza sativa subsp. japonica (Rice), this protein is Transcription factor EAT1.